The primary structure comprises 255 residues: Type III pantothenate kinase (255 aa).

6–13 serves as a coordination point for ATP; it reads DIGNTNIK. Residue 107–110 coordinates substrate; the sequence is GADR. The active-site Proton acceptor is aspartate 109. Residue threonine 132 participates in ATP binding. Threonine 184 is a binding site for substrate.

This sequence belongs to the type III pantothenate kinase family. As to quaternary structure, homodimer. NH4(+) is required as a cofactor. It depends on K(+) as a cofactor.

Its subcellular location is the cytoplasm. It carries out the reaction (R)-pantothenate + ATP = (R)-4'-phosphopantothenate + ADP + H(+). It functions in the pathway cofactor biosynthesis; coenzyme A biosynthesis; CoA from (R)-pantothenate: step 1/5. Functionally, catalyzes the phosphorylation of pantothenate (Pan), the first step in CoA biosynthesis. The protein is Type III pantothenate kinase of Roseiflexus sp. (strain RS-1).